A 553-amino-acid polypeptide reads, in one-letter code: Glycerol kinase 2 (553 aa).

Position 20 (T20) interacts with substrate. Residue R24 coordinates ATP. The substrate site is built by R94, Y148, and D259. ATP-binding positions include T281, G326, and 427–431; that span reads GMTNN. Residues 526 to 546 traverse the membrane as a helical segment; the sequence is IFSSLPLGFFIVSSMVMLIGA.

The protein belongs to the FGGY kinase family. As to quaternary structure, interacts with ARMC12. Interacts with PLD6. Testis-specific. Expressed in the midpiece of spermatozoa.

It is found in the mitochondrion outer membrane. The protein localises to the cytoplasm. It catalyses the reaction glycerol + ATP = sn-glycerol 3-phosphate + ADP + H(+). It functions in the pathway polyol metabolism; glycerol degradation via glycerol kinase pathway; sn-glycerol 3-phosphate from glycerol: step 1/1. Functionally, key enzyme in the regulation of glycerol uptake and metabolism. Essential for male fertility and sperm mitochondrial sheath formation. Required for proper arrangement of crescent-like mitochondria to form the mitochondrial sheath during spermatogenesis. Can induce mitochondrial clustering through interactions with PLD6 and up-regulation of phosphatidic acid synthesis in the mitochondria. The chain is Glycerol kinase 2 (GK2) from Homo sapiens (Human).